The sequence spans 398 residues: Phosphoglycerate kinase (398 aa).

Residues 24–26, arginine 40, 63–66, arginine 122, and arginine 155 contribute to the substrate site; these read DFN and HMGR. ATP contacts are provided by residues lysine 206, glycine 294, glutamate 325, and 354 to 357; that span reads GGDS.

This sequence belongs to the phosphoglycerate kinase family. As to quaternary structure, monomer.

It is found in the cytoplasm. It carries out the reaction (2R)-3-phosphoglycerate + ATP = (2R)-3-phospho-glyceroyl phosphate + ADP. The protein operates within carbohydrate degradation; glycolysis; pyruvate from D-glyceraldehyde 3-phosphate: step 2/5. The sequence is that of Phosphoglycerate kinase from Picosynechococcus sp. (strain ATCC 27264 / PCC 7002 / PR-6) (Agmenellum quadruplicatum).